Reading from the N-terminus, the 199-residue chain is CASP-like protein 2B1 (199 aa).

Topologically, residues 1–26 (MSYLGVGLSPVNVAGTKMKLMDRKVR) are cytoplasmic. Residues 27–47 (LTELILRCSVCALALVAAILI) traverse the membrane as a helical segment. Residues 48-69 (ATDTQVKEIFTIQKKAKYTDMK) are Extracellular-facing. Residues 70–90 (ALVFLVVVNGIAAAYSLLHMV) traverse the membrane as a helical segment. The Cytoplasmic segment spans residues 91 to 106 (RCVVGMMKGSVLFSKP). The helical transmembrane segment at 107-127 (LAWAIFSGDQAIAYLTVAGVA) threads the bilayer. Residues 128–164 (AAAQSAAFAKLGEPELQWMKICTIYGKFCNQVGEGIA) lie on the Extracellular side of the membrane. A helical transmembrane segment spans residues 165 to 185 (TALLASIGMVLISSISAFALF). At 186-199 (RLYGGNKAQQGSRW) the chain is on the cytoplasmic side.

The protein belongs to the Casparian strip membrane proteins (CASP) family. As to quaternary structure, homodimer and heterodimers.

It localises to the cell membrane. This is CASP-like protein 2B1 from Eutrema halophilum (Salt cress).